A 477-amino-acid polypeptide reads, in one-letter code: ATP-dependent rRNA helicase RRP3 (477 aa).

The interval 1-22 is disordered; the sequence is MSVKVDGMINKKSKTHSKKLDA. The short motif at 65–93 is the Q motif element; the sequence is KSFNELKLIPELLEAIQQMKFTKPTPIQS. The Helicase ATP-binding domain occupies 96-267; sequence IPHALEGKDI…RASLHNPVRV (172 aa). 109-116 serves as a coordination point for ATP; sequence AQTGSGKT. Residues 215-218 carry the DEAD box motif; that stretch reads DEAD. A Helicase C-terminal domain is found at 294–438; the sequence is YLIHLLNEFL…KDPSPSKAVL (145 aa). The tract at residues 452 to 477 is disordered; that stretch reads AIRQTKDFHEKRNPKKNRDDRDREER.

It belongs to the DEAD box helicase family. DDX47/RRP3 subfamily. Interacts with the SSU processome.

The protein localises to the nucleus. It carries out the reaction ATP + H2O = ADP + phosphate + H(+). Functionally, ATP-dependent rRNA helicase required for pre-ribosomal RNA processing. Involved in the maturation of the 35S-pre-rRNA and to its cleavage to mature 18S rRNA. This Debaryomyces hansenii (strain ATCC 36239 / CBS 767 / BCRC 21394 / JCM 1990 / NBRC 0083 / IGC 2968) (Yeast) protein is ATP-dependent rRNA helicase RRP3.